The chain runs to 189 residues: Xanthine phosphoribosyltransferase (189 aa).

Residues Leu20 and Asn27 each coordinate xanthine. Residue Ala128 to Ala132 participates in 5-phospho-alpha-D-ribose 1-diphosphate binding. Lys156 contacts xanthine.

It belongs to the purine/pyrimidine phosphoribosyltransferase family. Xpt subfamily. As to quaternary structure, homodimer.

The protein resides in the cytoplasm. The enzyme catalyses XMP + diphosphate = xanthine + 5-phospho-alpha-D-ribose 1-diphosphate. Its pathway is purine metabolism; XMP biosynthesis via salvage pathway; XMP from xanthine: step 1/1. In terms of biological role, converts the preformed base xanthine, a product of nucleic acid breakdown, to xanthosine 5'-monophosphate (XMP), so it can be reused for RNA or DNA synthesis. This chain is Xanthine phosphoribosyltransferase, found in Leuconostoc mesenteroides subsp. mesenteroides (strain ATCC 8293 / DSM 20343 / BCRC 11652 / CCM 1803 / JCM 6124 / NCDO 523 / NBRC 100496 / NCIMB 8023 / NCTC 12954 / NRRL B-1118 / 37Y).